A 211-amino-acid polypeptide reads, in one-letter code: Thymidylate kinase (211 aa).

10-17 is a binding site for ATP; that stretch reads GVEGCGKT.

It belongs to the thymidylate kinase family.

It catalyses the reaction dTMP + ATP = dTDP + ADP. Its function is as follows. Phosphorylation of dTMP to form dTDP in both de novo and salvage pathways of dTTP synthesis. The polypeptide is Thymidylate kinase (Nostoc punctiforme (strain ATCC 29133 / PCC 73102)).